Here is a 232-residue protein sequence, read N- to C-terminus: Ribonuclease 3 (232 aa).

An RNase III domain is found at 7-136 (AALLEDTIDY…LLGAVFCDGG (130 aa)). E49 contacts Mg(2+). D53 is a catalytic residue. Mg(2+)-binding residues include N122 and E125. E125 is an active-site residue. Residues 163–232 (DYKTRLQERL…AKQALEYLEE (70 aa)) enclose the DRBM domain.

Belongs to the ribonuclease III family. As to quaternary structure, homodimer. Mg(2+) is required as a cofactor.

The protein localises to the cytoplasm. It carries out the reaction Endonucleolytic cleavage to 5'-phosphomonoester.. Digests double-stranded RNA. Involved in the processing of primary rRNA transcript to yield the immediate precursors to the large and small rRNAs (23S and 16S). Processes some mRNAs, and tRNAs when they are encoded in the rRNA operon. Processes pre-crRNA and tracrRNA of type II CRISPR loci if present in the organism. The chain is Ribonuclease 3 from Syntrophotalea carbinolica (strain DSM 2380 / NBRC 103641 / GraBd1) (Pelobacter carbinolicus).